We begin with the raw amino-acid sequence, 44 residues long: uncharacterized protein (44 aa).

A helical transmembrane segment spans residues 19–39 (AVGFVVSFGFFAFLFVMATVI).

The protein localises to the cell membrane. This is an uncharacterized protein from Bacillus subtilis (strain 168).